The chain runs to 130 residues: Small ribosomal subunit protein uS9 (130 aa).

The protein belongs to the universal ribosomal protein uS9 family.

The protein is Small ribosomal subunit protein uS9 of Alkalilimnicola ehrlichii (strain ATCC BAA-1101 / DSM 17681 / MLHE-1).